The sequence spans 522 residues: Sorting nexin-1 (522 aa).

Positions 1 to 142 (MASGGGGCSA…ELEEEEQEDQ (142 aa)) are disordered. 2 positions are modified to phosphoserine: Ser-32 and Ser-39. A compositionally biased stretch (acidic residues) spans 35 to 45 (EAGDSDTEGED). Phosphothreonine is present on residues Thr-41 and Thr-48. The segment covering 55 to 65 (KPQSPKKTTSL) has biased composition (polar residues). Phosphoserine is present on residues Ser-58 and Ser-72. Positions 71–80 (GSKENGIHEE) are enriched in basic and acidic residues. Residues 98–107 (LDSTQNNQKT) show a composition bias toward polar residues. A compositionally biased stretch (acidic residues) spans 132-142 (EELEEEEQEDQ). The PX domain occupies 143–272 (FDLTVGITDP…EFLEKEELPR (130 aa)). A 1,2-diacyl-sn-glycero-3-phospho-(1D-myo-inositol-3-phosphate)-binding residues include Arg-186, Ser-188, and Lys-214. At Ser-188 the chain carries Phosphoserine. Lys-237 bears the N6-acetyllysine mark. Residue Arg-238 participates in a 1,2-diacyl-sn-glycero-3-phospho-(1D-myo-inositol-3-phosphate) binding. Residue Ser-280 is modified to Phosphoserine. The segment at 281–298 (GAGLLKMFNKATDAVSKM) is membrane-binding amphipathic helix. One can recognise a BAR domain in the interval 302–522 (MNESDIWFEE…AFLPEARAIS (221 aa)).

Belongs to the sorting nexin family. Predominantly forms heterodimers with BAR domain-containing sorting nexins SNX5, SNX6 and SNX32; can self-associate to form homodimers. The heterodimers are proposed to self-assemble into helical arrays on the membrane to stabilize and expand local membrane curvature underlying endosomal tubule formation. Thought to be a component of the originally described retromer complex (also called SNX-BAR retromer) which is a pentamer containing the heterotrimeric retromer cargo-selective complex (CSC), also described as vacuolar protein sorting subcomplex (VPS) and a heterodimeric membrane-deforming subcomplex formed between SNX1 or SNX2 and SNX5 or SNX6 (also called SNX-BAR subcomplex); the respective CSC and SNX-BAR subcomplexes associate with low affinity. Interacts with SNX5, SNX6, SNX32, VPS26A, VPS29, VPS35, DRD5, DENND5A, KALRN, RHOG (GDP-bound form). The interaction with SNX2 is reported controversially. Interacts with DNAJC13; prevented by presence of HGS. Interacts with HGS.

The protein localises to the endosome membrane. It localises to the golgi apparatus. The protein resides in the trans-Golgi network membrane. It is found in the early endosome membrane. Its subcellular location is the cell projection. The protein localises to the lamellipodium. Its function is as follows. Involved in several stages of intracellular trafficking. Interacts with membranes containing phosphatidylinositol 3-phosphate (PtdIns(3P)) or phosphatidylinositol 3,5-bisphosphate (PtdIns(3,5)P2). Acts in part as component of the retromer membrane-deforming SNX-BAR subcomplex. The SNX-BAR retromer mediates retrograde transport of cargo proteins from endosomes to the trans-Golgi network (TGN) and is involved in endosome-to-plasma membrane transport for cargo protein recycling. The SNX-BAR subcomplex functions to deform the donor membrane into a tubular profile called endosome-to-TGN transport carrier (ETC). Can sense membrane curvature and has in vitro vesicle-to-membrane remodeling activity. Involved in retrograde endosome-to-TGN transport of lysosomal enzyme receptors (IGF2R, M6PR and SORT1). Plays a role in targeting ligand-activated EGFR to the lysosomes for degradation after endocytosis from the cell surface and release from the Golgi. Involvement in retromer-independent endocytic trafficking of P2RY1 and lysosomal degradation of protease-activated receptor-1/F2R. Promotes KALRN- and RHOG-dependent but retromer-independent membrane remodeling such as lamellipodium formation; the function is dependent on GEF activity of KALRN. Required for endocytosis of DRD5 upon agonist stimulation but not for basal receptor trafficking. The chain is Sorting nexin-1 (Snx1) from Rattus norvegicus (Rat).